The chain runs to 155 residues: Polyadenylate-binding protein-interacting protein 5 (155 aa).

The PAM2-like signature appears at 7 to 17 (ALNPHAASYVP). One can recognise a CUE domain in the interval 66–109 (DIDMDIEYLLVTFSGLSQESITDVYLANGGDLEATIEMLNQLEI). Residues 114–155 (SEENLPETLDIGDISESGPSTSKSTEVAASTSSVIPNAPVSA) form a disordered region. Residues 130–148 (SGPSTSKSTEVAASTSSVI) show a composition bias toward polar residues.

Specifically expressed in immature siliques.

Promotes polyploidy in dark-grown seedlings. Regulates the endocycle leading to hypocotyl elongation. The protein is Polyadenylate-binding protein-interacting protein 5 (CID5) of Arabidopsis thaliana (Mouse-ear cress).